Consider the following 333-residue polypeptide: GTP 3',8-cyclase (333 aa).

The 215-residue stretch at 7–221 folds into the Radical SAM core domain; the sequence is KFGRVHDYIR…FEACNEAGYE (215 aa). Arginine 16 contacts GTP. The [4Fe-4S] cluster site is built by cysteine 23 and cysteine 27. An S-adenosyl-L-methionine-binding site is contributed by tyrosine 29. Cysteine 30 is a [4Fe-4S] cluster binding site. Arginine 66 is a GTP binding site. An S-adenosyl-L-methionine-binding site is contributed by glycine 70. A GTP-binding site is contributed by threonine 97. Serine 121 contributes to the S-adenosyl-L-methionine binding site. Lysine 158 provides a ligand contact to GTP. Methionine 192 lines the S-adenosyl-L-methionine pocket. 2 residues coordinate [4Fe-4S] cluster: cysteine 257 and cysteine 260. GTP is bound at residue 262-264; that stretch reads RLR. Position 274 (cysteine 274) interacts with [4Fe-4S] cluster.

Belongs to the radical SAM superfamily. MoaA family. Monomer and homodimer. Requires [4Fe-4S] cluster as cofactor.

The catalysed reaction is GTP + AH2 + S-adenosyl-L-methionine = (8S)-3',8-cyclo-7,8-dihydroguanosine 5'-triphosphate + 5'-deoxyadenosine + L-methionine + A + H(+). Its pathway is cofactor biosynthesis; molybdopterin biosynthesis. Functionally, catalyzes the cyclization of GTP to (8S)-3',8-cyclo-7,8-dihydroguanosine 5'-triphosphate. The polypeptide is GTP 3',8-cyclase (Listeria monocytogenes serotype 4b (strain CLIP80459)).